The sequence spans 630 residues: 1-deoxy-D-xylulose-5-phosphate synthase (630 aa).

Thiamine diphosphate-binding positions include histidine 72 and 113–115 (GHS). Residue aspartate 144 participates in Mg(2+) binding. Thiamine diphosphate-binding positions include 145–146 (GA), asparagine 173, tyrosine 284, and glutamate 367. Asparagine 173 contacts Mg(2+).

The protein belongs to the transketolase family. DXPS subfamily. Homodimer. Mg(2+) serves as cofactor. Requires thiamine diphosphate as cofactor.

The enzyme catalyses D-glyceraldehyde 3-phosphate + pyruvate + H(+) = 1-deoxy-D-xylulose 5-phosphate + CO2. The protein operates within metabolic intermediate biosynthesis; 1-deoxy-D-xylulose 5-phosphate biosynthesis; 1-deoxy-D-xylulose 5-phosphate from D-glyceraldehyde 3-phosphate and pyruvate: step 1/1. Catalyzes the acyloin condensation reaction between C atoms 2 and 3 of pyruvate and glyceraldehyde 3-phosphate to yield 1-deoxy-D-xylulose-5-phosphate (DXP). This chain is 1-deoxy-D-xylulose-5-phosphate synthase, found in Bacillus mycoides (strain KBAB4) (Bacillus weihenstephanensis).